The chain runs to 281 residues: Phosphatidylglycerol--prolipoprotein diacylglyceryl transferase (281 aa).

The next 3 membrane-spanning stretches (helical) occupy residues 11–31 (IIFTIGPVSARWYGFMYVISF), 57–77 (LLYSIFLGSCIGGRIGYIIFY), and 89–109 (VFYIWEGGMSFHGGLIGAIIV). Residue R140 participates in a 1,2-diacyl-sn-glycero-3-phospho-(1'-sn-glycerol) binding. 3 helical membrane passes run 194 to 214 (PTQLYEFFLEGILLFFIIYFF), 222 to 242 (GSISGLFLIFYGLFRIFIEFF), and 255 to 275 (IITMGQILSLPMIIAGLIIMY).

This sequence belongs to the Lgt family.

Its subcellular location is the cell inner membrane. It catalyses the reaction L-cysteinyl-[prolipoprotein] + a 1,2-diacyl-sn-glycero-3-phospho-(1'-sn-glycerol) = an S-1,2-diacyl-sn-glyceryl-L-cysteinyl-[prolipoprotein] + sn-glycerol 1-phosphate + H(+). The protein operates within protein modification; lipoprotein biosynthesis (diacylglyceryl transfer). Its function is as follows. Catalyzes the transfer of the diacylglyceryl group from phosphatidylglycerol to the sulfhydryl group of the N-terminal cysteine of a prolipoprotein, the first step in the formation of mature lipoproteins. The sequence is that of Phosphatidylglycerol--prolipoprotein diacylglyceryl transferase from Buchnera aphidicola subsp. Acyrthosiphon pisum (strain APS) (Acyrthosiphon pisum symbiotic bacterium).